A 319-amino-acid chain; its full sequence is Olfactory receptor 13F1 (319 aa).

The Extracellular segment spans residues 1 to 25 (MFPANWTSVKVFFFLGFFHYPKVQV). N-linked (GlcNAc...) asparagine glycosylation is present at Asn-5. The helical transmembrane segment at 26–46 (IIFAVCLLMYLITLLGNIFLI) threads the bilayer. Residues 47–54 (SITILDSH) are Cytoplasmic-facing. A helical transmembrane segment spans residues 55 to 75 (LHTPMYLFLSNLSFLDIWYSS). Topologically, residues 76-99 (SALSPMLANFVSGRNTISFSGCAT) are extracellular. Cys-97 and Cys-189 are disulfide-bonded. The helical transmembrane segment at 100–120 (QMYLSLAMGSTECVLLPMMAY) threads the bilayer. Topologically, residues 121–139 (DRYVAICNPLRYPVIMNRR) are cytoplasmic. A helical membrane pass occupies residues 140 to 160 (TCVQIAAGSWMTGCLTAMVEM). Over 161 to 197 (MSVLPLSLCGNSIINHFTCEILAILKLVCVDTSLVQL) the chain is Extracellular. A helical membrane pass occupies residues 198 to 217 (IMLVISVLLLPMPMLLICIS). Residues 218 to 237 (YAFILASILRISSVEGRSKA) lie on the Cytoplasmic side of the membrane. Residues 238-258 (FSTCTAHLMVVVLFYGTALSM) traverse the membrane as a helical segment. At 259–271 (HLKPSAVDSQEID) the chain is on the extracellular side. A helical membrane pass occupies residues 272–292 (KFMALVYAGQTPMLNPIIYSL). Residues 293 to 319 (RNKEVKVALKKLLIRNHFNTAFISILK) lie on the Cytoplasmic side of the membrane.

This sequence belongs to the G-protein coupled receptor 1 family.

Its subcellular location is the cell membrane. In terms of biological role, odorant receptor. In Homo sapiens (Human), this protein is Olfactory receptor 13F1 (OR13F1).